We begin with the raw amino-acid sequence, 771 residues long: Rho GTPase-activating protein 26 (771 aa).

A BAR domain is found at 7 to 262 (EFSDCYLDSP…MKENPHEHLA (256 aa)). Residues 265-369 (PFTMEGYLYV…WMEAMDGREP (105 aa)) enclose the PH domain. The Rho-GAP domain occupies 383–568 (AQLDNIGFSI…IIIENYEEMF (186 aa)). Positions 575-712 (PQTNSQLHLS…SSTSSDSSPV (138 aa)) are disordered. A compositionally biased stretch (basic and acidic residues) spans 608–617 (HSSEKEEKRN). Over residues 618–637 (SVNSSAESVSSSNANSSVNS) the composition is skewed to low complexity. Composition is skewed to polar residues over residues 638 to 650 (TCTQRSNMNNLNA) and 662 to 671 (RPNSLLNPKN). Composition is skewed to low complexity over residues 673–683 (SGLLPSSLNPS) and 691–712 (PMVSAPSSPMPTSSTSSDSSPV). An SH3 domain is found at 713 to 771 (SVPRKAKALYACKAEHDSELSFSAGTVFENVCPSQEPGWLEGTLNGKTGLIPENYVEFL).

It localises to the cell junction. The protein resides in the focal adhesion. It is found in the cytoplasm. The protein localises to the cytoskeleton. Its subcellular location is the endosome membrane. Its function is as follows. GTPase-activating protein for rhoa and cdc42. May be involved in the regulation of neosynthesized protein export through a Rab-endososomal dependent export route. This is Rho GTPase-activating protein 26 (arhgap26) from Xenopus laevis (African clawed frog).